A 306-amino-acid polypeptide reads, in one-letter code: Homoserine O-acetyltransferase (306 aa).

The Acyl-thioester intermediate role is filled by Cys142. The substrate site is built by Lys163 and Ser192. Catalysis depends on His235, which acts as the Proton acceptor. Glu237 is an active-site residue. Residue Arg249 coordinates substrate.

It belongs to the MetA family.

Its subcellular location is the cytoplasm. The enzyme catalyses L-homoserine + acetyl-CoA = O-acetyl-L-homoserine + CoA. Its pathway is amino-acid biosynthesis; L-methionine biosynthesis via de novo pathway; O-acetyl-L-homoserine from L-homoserine: step 1/1. In terms of biological role, transfers an acetyl group from acetyl-CoA to L-homoserine, forming acetyl-L-homoserine. In Clostridium botulinum (strain Eklund 17B / Type B), this protein is Homoserine O-acetyltransferase.